Reading from the N-terminus, the 172-residue chain is Small ribosomal subunit protein uS5 (172 aa).

An S5 DRBM domain is found at L17 to V80.

Belongs to the universal ribosomal protein uS5 family. Part of the 30S ribosomal subunit. Contacts proteins S4 and S8.

Its function is as follows. With S4 and S12 plays an important role in translational accuracy. Located at the back of the 30S subunit body where it stabilizes the conformation of the head with respect to the body. The chain is Small ribosomal subunit protein uS5 from Burkholderia pseudomallei (strain 1106a).